Consider the following 74-residue polypeptide: UPF0154 protein OB1676 (74 aa).

The chain crosses the membrane as a helical span at residues 4–24; that stretch reads IWVVLIAIAALVAGVALGFFI.

Belongs to the UPF0154 family.

It is found in the membrane. This is UPF0154 protein OB1676 from Oceanobacillus iheyensis (strain DSM 14371 / CIP 107618 / JCM 11309 / KCTC 3954 / HTE831).